The chain runs to 404 residues: Cysteine desulfurase IscS (404 aa).

Pyridoxal 5'-phosphate contacts are provided by residues 75 to 76 (AT), Asn-155, Gln-183, and 203 to 205 (SGH). Lys-206 is modified (N6-(pyridoxal phosphate)lysine). Thr-243 provides a ligand contact to pyridoxal 5'-phosphate. The Cysteine persulfide intermediate role is filled by Cys-328. A [2Fe-2S] cluster-binding site is contributed by Cys-328.

This sequence belongs to the class-V pyridoxal-phosphate-dependent aminotransferase family. NifS/IscS subfamily. As to quaternary structure, homodimer. Forms a heterotetramer with IscU, interacts with other sulfur acceptors. Requires pyridoxal 5'-phosphate as cofactor.

The protein localises to the cytoplasm. The catalysed reaction is (sulfur carrier)-H + L-cysteine = (sulfur carrier)-SH + L-alanine. The protein operates within cofactor biosynthesis; iron-sulfur cluster biosynthesis. Master enzyme that delivers sulfur to a number of partners involved in Fe-S cluster assembly, tRNA modification or cofactor biosynthesis. Catalyzes the removal of elemental sulfur atoms from cysteine to produce alanine. Functions as a sulfur delivery protein for Fe-S cluster synthesis onto IscU, an Fe-S scaffold assembly protein, as well as other S acceptor proteins. This is Cysteine desulfurase IscS from Shewanella amazonensis (strain ATCC BAA-1098 / SB2B).